The sequence spans 128 residues: Probable 4-amino-4-deoxy-L-arabinose-phosphoundecaprenol flippase subunit ArnF (128 aa).

Topologically, residues 1 to 2 (MG) are cytoplasmic. The chain crosses the membrane as a helical span at residues 3-23 (LIWGLFSVIIASVAQLSLGFA). Residues 24–35 (ASHLPPMTHLWD) lie on the Periplasmic side of the membrane. A helical membrane pass occupies residues 36-56 (FIAALLAFGLDARILLLGLLG). At 57–75 (YLLSVFCWYKTLHKLALSK) the chain is on the cytoplasmic side. A helical transmembrane segment spans residues 76 to 96 (AYALLSMSYVLVWIASMVLPG). At 97–100 (REGT) the chain is on the periplasmic side. The chain crosses the membrane as a helical span at residues 101–121 (FSLKALLGVACIMSGLMLIFL). The Cytoplasmic portion of the chain corresponds to 122 to 128 (PTTKQRY).

This sequence belongs to the ArnF family. As to quaternary structure, heterodimer of ArnE and ArnF.

Its subcellular location is the cell inner membrane. It participates in bacterial outer membrane biogenesis; lipopolysaccharide biosynthesis. Its function is as follows. Translocates 4-amino-4-deoxy-L-arabinose-phosphoundecaprenol (alpha-L-Ara4N-phosphoundecaprenol) from the cytoplasmic to the periplasmic side of the inner membrane. This Shigella flexneri serotype 5b (strain 8401) protein is Probable 4-amino-4-deoxy-L-arabinose-phosphoundecaprenol flippase subunit ArnF.